The following is a 375-amino-acid chain: Phosphoribulokinase, chloroplastic (375 aa).

The transit peptide at 1–31 (MAFTMRAPAPRATAQSRVTANRARRSLVVRA) directs the protein to the chloroplast. Cys47 and Cys86 are oxidised to a cystine.

The protein belongs to the phosphoribulokinase family. As to quaternary structure, component of a complex that contains two dimers of PRK, two tetramers of GAPDH and CP12.

It is found in the plastid. It localises to the chloroplast. It carries out the reaction D-ribulose 5-phosphate + ATP = D-ribulose 1,5-bisphosphate + ADP + H(+). Its pathway is carbohydrate biosynthesis; Calvin cycle. Its activity is regulated as follows. Light regulated via thioredoxin by reversible oxidation/reduction of sulfhydryl/disulfide groups. The chain is Phosphoribulokinase, chloroplastic (PRKA) from Chlamydomonas reinhardtii (Chlamydomonas smithii).